Reading from the N-terminus, the 192-residue chain is uncharacterized protein (192 aa).

The Nudix hydrolase domain occupies 29 to 160 (HRQAAVLIPI…PLDIYRRGDS (132 aa)). A Nudix box motif is present at residues 67 to 89 (GAVDDTDTSVIAAALREAEEEVA). Mg(2+)-binding residues include glutamate 83 and glutamate 87.

It belongs to the Nudix hydrolase family. PCD1 subfamily. The cofactor is Mn(2+). It depends on Mg(2+) as a cofactor.

In terms of biological role, probably mediates the hydrolysis of some nucleoside diphosphate derivatives. This is an uncharacterized protein from Escherichia coli O7:K1 (strain IAI39 / ExPEC).